The following is a 1482-amino-acid chain: Cystic fibrosis transmembrane conductance regulator (1482 aa).

Topologically, residues 1-77 are cytoplasmic; that stretch reads MQRSPLEKAN…KLINALRRCF (77 aa). Residues 78–98 traverse the membrane as a helical segment; sequence FWRFVFHGIILYLGEVTKAVQ. The region spanning 81–365 is the ABC transmembrane type-1 1 domain; sequence FVFHGIILYL…WAVQTWYDSL (285 aa). Residues 99 to 122 lie on the Extracellular side of the membrane; that stretch reads PLLLGRIIASYDPDNKVERSIAIY. A helical transmembrane segment spans residues 123 to 146; sequence LGIGLCLLFIVRTLLLHPAIFGLH. At 147-195 the chain is on the cytoplasmic side; the sequence is HMGMQMRIALFSLIYKKTLKLSSRVLDKISTGQLISLLSNNLNKFDEGL. Residues 196–216 traverse the membrane as a helical segment; it reads ALAHFVWIVPLQVVLLMGLLW. Residues 217–222 lie on the Extracellular side of the membrane; it reads DLLQAS. The helical transmembrane segment at 223-243 threads the bilayer; that stretch reads AFCGLAFLIVLALFQAWLGQM. At 244–298 the chain is on the cytoplasmic side; that stretch reads MMKYRERRAGKINERLVITSEMIDNIQSVKAYCWEEAMEKMIENLRETELKLTRK. Residues 299–319 form a helical membrane-spanning segment; the sequence is TAYVRYFNSSAFFFSGFFVVF. At 320–339 the chain is on the extracellular side; it reads LAVLPYALIKGIILRKIFTT. Residues 340–358 form a helical membrane-spanning segment; that stretch reads ISFCIVLRMAVTRQFPWAV. Residues 359 to 859 are Cytoplasmic-facing; it reads QTWYDSLGAI…YLRYITIHKN (501 aa). ATP contacts are provided by residues Trp-401, Ser-434, 458 to 465, and Gln-493; that span reads GSTGAGKT. Positions 423–646 constitute an ABC transporter 1 domain; the sequence is NGDNGLFFSN…RPDFSSKLMG (224 aa). Cys-524 is lipidated: S-palmitoyl cysteine. Residues Ser-549 and Ser-660 each carry the phosphoserine modification. A disordered R region region spans residues 654-832; that stretch reads SAERRSSILT…DEINEEDLKE (179 aa). Ser-670 is modified (phosphoserine; by PKA). The residue at position 686 (Ser-686) is a Phosphoserine. Lys-688 is covalently cross-linked (Glycyl lysine isopeptide (Lys-Gly) (interchain with G-Cter in ubiquitin)). A phosphoserine mark is found at Ser-700, Ser-712, Ser-737, Ser-769, Ser-796, and Ser-814. A helical transmembrane segment spans residues 860-880; the sequence is LVFVLIWCLVIFLVEVAASLV. The ABC transmembrane type-1 2 domain occupies 860-1156; the sequence is LVFVLIWCLV…AVNSSIDVDS (297 aa). Residues 881–919 lie on the Extracellular side of the membrane; it reads GLWLLEDISFKDKTNGTNGANNTFPVIITDTSKYYLFYI. 2 N-linked (GlcNAc...) asparagine glycosylation sites follow: Asn-895 and Asn-901. The chain crosses the membrane as a discontinuously helical span at residues 920 to 940; that stretch reads YVGIADTFFALGIFRGLPLVH. Residues 941–991 lie on the Cytoplasmic side of the membrane; the sequence is TLISVSKILHHKMLYSVLKAPMSTFNTLKPGGILNRFSKDIAILDDLLPLT. A helical membrane pass occupies residues 992–1012; the sequence is IFDFIQLILIVVGALIVVSAI. Residues 1013–1014 are Extracellular-facing; the sequence is RP. The chain crosses the membrane as a helical span at residues 1015 to 1035; sequence YIFLATVPVIIAFIMLRAYFL. Over 1036–1096 the chain is Cytoplasmic; the sequence is QTSQQLKQLE…TASWFLYLST (61 aa). A helical transmembrane segment spans residues 1097–1117; sequence LRWFQMRIELVFVIFFIAVTF. Residues 1118-1131 lie on the Extracellular side of the membrane; sequence ISILTTGDGEGRVG. Residues 1132 to 1152 traverse the membrane as a helical segment; that stretch reads ILLTLAMNIMSTLQWAVNSSI. At 1153-1482 the chain is on the cytoplasmic side; sequence DVDSLMRSVS…TEEEVQETRL (330 aa). Positions 1212-1445 constitute an ABC transporter 2 domain; sequence MIVKDLTAKY…KSLYRQAISH (234 aa). Residues Tyr-1221 and 1246-1253 contribute to the ATP site; that span reads GRTGSGKS. The interaction with GORASP2 stretch occupies residues 1388 to 1482; sequence RVLKNAFANC…TEEEVQETRL (95 aa). Cys-1397 carries S-palmitoyl cysteine lipidation. A phosphoserine mark is found at Ser-1446 and Ser-1458. Positions 1480-1482 match the PDZ-binding motif; that stretch reads TRL.

Belongs to the ABC transporter superfamily. ABCC family. CFTR transporter (TC 3.A.1.202) subfamily. In terms of assembly, monomer; does not require oligomerization for channel activity. May form oligomers in the membrane. Interacts with SLC26A3, SLC26A6 and NHERF1. Interacts with SHANK2. Interacts with MYO6. Interacts (via C-terminus) with GOPC (via PDZ domain); this promotes CFTR internalization and thereby decreases channel activity. Interacts with SLC4A7 through NHERF1. Found in a complex with MYO5B and RAB11A. Interacts with ANO1. Interacts with SLC26A8. Interacts with AHCYL1; the interaction increases CFTR activity. Interacts with CSE1L. The core-glycosylated form interacts with GORASP2 (via PDZ GRASP-type 1 domain) in respone to ER stress. Interacts with MARCHF2; the interaction leads to CFTR ubiqtuitination and degradation. Interacts with ADGRG2. N-glycosylated. In terms of processing, phosphorylated; cAMP treatment promotes phosphorylation and activates the channel. Dephosphorylation decreases the ATPase activity (in vitro). Phosphorylation at PKA sites activates the channel. Phosphorylation at PKC sites enhances the response to phosphorylation by PKA. Phosphorylated by AMPK; this inhibits channel activity. Post-translationally, ubiquitinated, leading to its degradation in the lysosome. Deubiquitination by USP10 in early endosomes enhances its endocytic recycling to the cell membrane. Ubiquitinated by RNF185 during ER stress. Ubiquitinated by MARCHF2.

Its subcellular location is the apical cell membrane. The protein resides in the early endosome membrane. It localises to the cell membrane. The protein localises to the recycling endosome membrane. It is found in the endoplasmic reticulum membrane. Its subcellular location is the nucleus. The catalysed reaction is ATP + H2O + closed Cl(-) channel = ADP + phosphate + open Cl(-) channel.. It catalyses the reaction chloride(in) = chloride(out). It carries out the reaction hydrogencarbonate(in) = hydrogencarbonate(out). The enzyme catalyses ATP + H2O = ADP + phosphate + H(+). Epithelial ion channel that plays an important role in the regulation of epithelial ion and water transport and fluid homeostasis. Mediates the transport of chloride ions across the cell membrane. Possesses an intrinsic ATPase activity and utilizes ATP to gate its channel; the passive flow of anions through the channel is gated by cycles of ATP binding and hydrolysis by the ATP-binding domains. The ion channel is also permeable to HCO(3)(-); selectivity depends on the extracellular chloride concentration. Exerts its function also by modulating the activity of other ion channels and transporters. Contributes to the regulation of the pH and the ion content of the epithelial fluid layer. Modulates the activity of the epithelial sodium channel (ENaC) complex, in part by regulating the cell surface expression of the ENaC complex. May regulate bicarbonate secretion and salvage in epithelial cells by regulating the transporter SLC4A7. Can inhibit the chloride channel activity of ANO1. Plays a role in the chloride and bicarbonate homeostasis during sperm epididymal maturation and capacitation. The protein is Cystic fibrosis transmembrane conductance regulator of Didelphis virginiana (North American opossum).